A 295-amino-acid chain; its full sequence is uncharacterized protein (295 aa).

The 225-residue stretch at 2–226 folds into the ABC transporter domain; sequence LSIESLCKSY…QQTNVFTLSV (225 aa). 34-41 lines the ATP pocket; the sequence is GPNGAGKT.

This sequence belongs to the ABC transporter superfamily.

This is an uncharacterized protein from Bacillus subtilis (strain 168).